Here is a 410-residue protein sequence, read N- to C-terminus: MPRFFTRHAATLFFPMALILYDFAAYLSTDLIQPGIINVVRDFNADVSLAPAAVSLYLAGGMALQWLLGPLSDRIGRRPVLITGALIFTLACAATMFTTSMTQFLIARAIQGTSICFIATVGYVTVQEAFGQTKGIKLMAIITSIVLIAPIIGPLSGAALMHFMHWKVLFAIIAVMGFISFVGLLLAMPETVKRGAVPFSAKSVLRDFRNVFCNRLFLFGAATISLSYIPMMSWVAVSPVILIDAGSLTTSQFAWTQVPVFGAVIVANAIVARFVKDPTEPRFIWRAVPIQLVGLSLLIVGNLLSPHVWLWSVLGTSLYAFGIGLIFPTLFRFTLFSNKLPKGTVSASLNMVILMVMSVSVEIGRWLWFNGGRLPFHLLAVVAGVIVVFTLAGLLNRVRQHQAAELVEEQ.

Topologically, residues 1 to 11 (MPRFFTRHAAT) are cytoplasmic. A helical membrane pass occupies residues 12 to 32 (LFFPMALILYDFAAYLSTDLI). Over 33–48 (QPGIINVVRDFNADVS) the chain is Periplasmic. Residues 49 to 69 (LAPAAVSLYLAGGMALQWLLG) form a helical membrane-spanning segment. The Cytoplasmic portion of the chain corresponds to 70–78 (PLSDRIGRR). Residues 79 to 99 (PVLITGALIFTLACAATMFTT) form a helical membrane-spanning segment. The Periplasmic portion of the chain corresponds to 100–103 (SMTQ). A helical membrane pass occupies residues 104–124 (FLIARAIQGTSICFIATVGYV). Topologically, residues 125 to 140 (TVQEAFGQTKGIKLMA) are cytoplasmic. A helical membrane pass occupies residues 141 to 161 (IITSIVLIAPIIGPLSGAALM). The Periplasmic segment spans residues 162-167 (HFMHWK). A helical membrane pass occupies residues 168–188 (VLFAIIAVMGFISFVGLLLAM). The Cytoplasmic segment spans residues 189–216 (PETVKRGAVPFSAKSVLRDFRNVFCNRL). Residues 217–237 (FLFGAATISLSYIPMMSWVAV) traverse the membrane as a helical segment. At 238 to 251 (SPVILIDAGSLTTS) the chain is on the periplasmic side. A helical membrane pass occupies residues 252–272 (QFAWTQVPVFGAVIVANAIVA). Residues 273–282 (RFVKDPTEPR) lie on the Cytoplasmic side of the membrane. Residues 283–303 (FIWRAVPIQLVGLSLLIVGNL) traverse the membrane as a helical segment. Topologically, residues 304–307 (LSPH) are periplasmic. A helical transmembrane segment spans residues 308–328 (VWLWSVLGTSLYAFGIGLIFP). At 329-348 (TLFRFTLFSNKLPKGTVSAS) the chain is on the cytoplasmic side. The helical transmembrane segment at 349 to 369 (LNMVILMVMSVSVEIGRWLWF) threads the bilayer. Residues 370-373 (NGGR) lie on the Periplasmic side of the membrane. Residues 374 to 394 (LPFHLLAVVAGVIVVFTLAGL) traverse the membrane as a helical segment. The Cytoplasmic portion of the chain corresponds to 395–410 (LNRVRQHQAAELVEEQ).

This sequence belongs to the major facilitator superfamily. Monomer.

It localises to the cell inner membrane. It catalyses the reaction Na(+)(in) + 2 H(+)(out) = Na(+)(out) + 2 H(+)(in). The enzyme catalyses K(+)(in) + H(+)(out) = K(+)(out) + H(+)(in). Efflux is inhibited by the ionophore carbonyl cyanide 3-chlorophenylhydrazone (CCCP). Proton-dependent efflux pump. Confers resistance to a broad spectrum of chemically unrelated substrates. Overexpression confers resistance to acriflavine, chloramphenicol, norfloxacin, ethidium bromide and tetraphenylphosphonium bromide (TPP). Can also export a broad range of quaternary ammonium compounds (QACs) and contribute to the intrinsic resistance of E.coli to these antimicrobial compounds. In addition to its role in multidrug resistance, MdtM likely plays a physiological role in alkaline pH homeostasis and in resistance to bile salts. May function in alkaline pH homeostasis when millimolar concentrations of sodium or potassium are present in the growth medium. When overexpressed, can confer a tolerance to alkaline pH values up to 9.75. Probably acts as a low-affinity antiporter that catalyzes the exchange of internal Na(+) and K(+) cations for extracellular protons to maintain a stable internal pH, acid relative to outside, during exposure to alkaline environments. Can also catalyze Rb(+)/H(+) and Li(+)/H(+) antiport, but not Ca(2+)/H(+) exchange. The exact stoichiometry of antiport is unknown. Finally, it could contribute to bile salt resistance by catalyzing the transport of bile salts out of the cell cytoplasm. Mediates a bile salt/H(+) exchange driven by the electrochemical gradient. Binds to cholate and deoxycholate with micromolar affinity and catalyzes both cholate/H(+) and deoxycholate/H(+) exchange reactions. The protein is Multidrug resistance protein MdtM of Escherichia coli (strain K12).